A 271-amino-acid polypeptide reads, in one-letter code: Phosphoglycerate mutase-like protein (271 aa).

Catalysis depends on His22, which acts as the Tele-phosphohistidine intermediate. Glu134 serves as the catalytic Proton donor/acceptor. Residues 252 to 271 (SAETTNYPGKVPEGLDNPSG) form a disordered region.

This sequence belongs to the phosphoglycerate mutase family. In terms of tissue distribution, expressed in the shoot apical meristem and meristematic zone of the root tips.

Functionally, may play a role in carbohydrates metabolism. The protein is Phosphoglycerate mutase-like protein of Arabidopsis thaliana (Mouse-ear cress).